Reading from the N-terminus, the 80-residue chain is Probable small nuclear ribonucleoprotein G (80 aa).

Positions 5 to 76 (GQPPDLKKYM…IVTVEALEPV (72 aa)) constitute a Sm domain.

This sequence belongs to the snRNP Sm proteins family.

It localises to the nucleus. Functionally, probable common Sm protein, is found in U1 and U2 snRNPs and may be part of the spliceosome. This is Probable small nuclear ribonucleoprotein G from Arabidopsis thaliana (Mouse-ear cress).